The sequence spans 59 residues: Large ribosomal subunit protein uL30 (59 aa).

The protein belongs to the universal ribosomal protein uL30 family. As to quaternary structure, part of the 50S ribosomal subunit.

The protein is Large ribosomal subunit protein uL30 of Brachyspira hyodysenteriae (strain ATCC 49526 / WA1).